Consider the following 72-residue polypeptide: Conotoxin LvVIA (72 aa).

Positions 1-17 (VLIIAVLFLTASELVTA) are cleaved as a signal peptide. The propeptide occupies 18–41 (DYTRDKWQYRAASLRDAMRNFRDT). 3 disulfide bridges follow: cysteine 44–cysteine 58, cysteine 51–cysteine 63, and cysteine 57–cysteine 70.

This sequence belongs to the conotoxin O1 superfamily. Expressed by the venom duct.

Its subcellular location is the secreted. The chain is Conotoxin LvVIA from Conus lividus (Livid cone).